Consider the following 752-residue polypeptide: Complement C2 (752 aa).

The first 20 residues, 1–20, serve as a signal peptide directing secretion; it reads MGPLMVLFCLLFLYPGLADS. 3 Sushi domains span residues 22–86, 87–146, and 149–206; these read PSCP…VCKP, VRCP…VCDN, and GHCP…ICRQ. Intrachain disulfides connect Cys-24/Cys-64, Cys-51/Cys-84, Cys-89/Cys-131, Cys-117/Cys-144, Cys-151/Cys-191, and Cys-177/Cys-204. N-linked (GlcNAc...) asparagine glycosylation is present at Asn-29. N-linked (GlcNAc...) asparagine glycosylation is present at Asn-112. The VWFA domain occupies 254–452; sequence NLYLLLDCSQ…KALHQVFEHM (199 aa). Residues 260–264 carry the MIDAS-like motif motif; the sequence is DCSQS. The Mg(2+) site is built by Ser-262 and Ser-264. Residues Ser-262 and Ser-264 each contribute to the Mn(2+) site. Asn-290 and Asn-333 each carry an N-linked (GlcNAc...) asparagine glycan. Thr-337 contributes to the Mg(2+) binding site. Thr-337 contributes to the Mn(2+) binding site. Disulfide bonds link Cys-463–Cys-581, Cys-492–Cys-508, and Cys-584–Cys-600. Positions 464-744 constitute a Peptidase S1 domain; the sequence is GVGNMSANAS…MQPWLRQHLG (281 aa). N-linked (GlcNAc...) asparagine glycosylation is found at Asn-467 and Asn-471. Active-site charge relay system residues include His-507 and Asp-561. Asn-621 is a glycosylation site (N-linked (GlcNAc...) asparagine). 2 disulfide bridges follow: Cys-638–Cys-665 and Cys-675–Cys-705. An N-linked (GlcNAc...) (complex) asparagine glycan is attached at Asn-651. The Charge relay system role is filled by Ser-679.

Belongs to the peptidase S1 family. As to quaternary structure, serine protease component of the C3 convertase, also named C4bC2b, composed of the serine protease complement C2b and complement C4b. Serine protease component of the C5 convertase, also named C4bC2bC3b, composed of the serine protease complement C2b, complement C3b, as well as complement C4b. (Microbial infection) Interacts with Schistosoma haematobium TOR (via N-terminal extracellular domain). This results in inhibition of the classical and lectin pathway of complement activation, probably due to interference with binding of C2a to C4b such that C3 convertase cannot be formed. This infers resistance to complement-mediated cell lysis, allowing parasite survival and infection. Mg(2+) serves as cofactor. It depends on Mn(2+) as a cofactor. Cleaved and activated by different proteases depending on the complement pathway to generate complement C2a and serine protease complement C2b chains. Cleaved and activated by C1S following activation by the classical complement system. Cleaved and activated by MASP2 following activation by the lectin complement system. Cleaved and activated by GZMK following activation by the GZMK complement system.

Its subcellular location is the secreted. It localises to the cell surface. The enzyme catalyses Selective cleavage of Arg-|-Ser bond in complement component C3 alpha-chain to form C3a and C3b, and Arg-|-Xaa bond in complement component C5 alpha-chain to form C5a and C5b.. Precursor of the catalytic component of the C3 and C5 convertase complexes, which are part of the complement pathway, a cascade of proteins that leads to phagocytosis and breakdown of pathogens and signaling that strengthens the adaptive immune system. Component C2 is part of the classical, lectin and GZMK complement systems. Its function is as follows. Catalytic component of the complement C3 and C5 convertase complexes. Following complement activation, recruited to the surface of pathogens by complement C4b opsonin to form the C3 convertase, or C3b and C4b opsonins to form the C5 convertase. As part of the C3 convertase, cleaves and activate C3 into C3a anaphylatoxin and C3b opsonin, the next components of the complement pathways. As part of the C5 convertase, cleaves and activate C5 into C5a anaphylatoxin and C5b component of the membrane attack complex. In Homo sapiens (Human), this protein is Complement C2.